The following is a 232-amino-acid chain: Phosphatidylserine decarboxylase proenzyme (232 aa).

Ser-190 functions as the Schiff-base intermediate with substrate; via pyruvic acid in the catalytic mechanism. Position 190 is a pyruvic acid (Ser); by autocatalysis (Ser-190).

The protein belongs to the phosphatidylserine decarboxylase family. PSD-A subfamily. As to quaternary structure, heterodimer of a large membrane-associated beta subunit and a small pyruvoyl-containing alpha subunit. The cofactor is pyruvate. In terms of processing, is synthesized initially as an inactive proenzyme. Formation of the active enzyme involves a self-maturation process in which the active site pyruvoyl group is generated from an internal serine residue via an autocatalytic post-translational modification. Two non-identical subunits are generated from the proenzyme in this reaction, and the pyruvate is formed at the N-terminus of the alpha chain, which is derived from the carboxyl end of the proenzyme. The post-translation cleavage follows an unusual pathway, termed non-hydrolytic serinolysis, in which the side chain hydroxyl group of the serine supplies its oxygen atom to form the C-terminus of the beta chain, while the remainder of the serine residue undergoes an oxidative deamination to produce ammonia and the pyruvoyl prosthetic group on the alpha chain.

It localises to the cell membrane. The catalysed reaction is a 1,2-diacyl-sn-glycero-3-phospho-L-serine + H(+) = a 1,2-diacyl-sn-glycero-3-phosphoethanolamine + CO2. It participates in phospholipid metabolism; phosphatidylethanolamine biosynthesis; phosphatidylethanolamine from CDP-diacylglycerol: step 2/2. In terms of biological role, catalyzes the formation of phosphatidylethanolamine (PtdEtn) from phosphatidylserine (PtdSer). The polypeptide is Phosphatidylserine decarboxylase proenzyme (Rhizobium leguminosarum bv. trifolii (strain WSM2304)).